The sequence spans 60 residues: MAVPARHTSKAKKNKRRTHYKLTAPSVQFDETTGDYSRSHRVSLKGYYKGRKIAKAASAE.

Positions M1 to K21 are disordered. Residues H7–Y20 show a composition bias toward basic residues.

It belongs to the bacterial ribosomal protein bL32 family.

This chain is Large ribosomal subunit protein bL32, found in Streptococcus thermophilus (strain ATCC BAA-250 / LMG 18311).